The primary structure comprises 205 residues: High frequency lysogenization protein HflD homolog (205 aa).

It belongs to the HflD family.

It is found in the cytoplasm. The protein localises to the cell inner membrane. The sequence is that of High frequency lysogenization protein HflD homolog from Vibrio atlanticus (strain LGP32) (Vibrio splendidus (strain Mel32)).